Here is a 548-residue protein sequence, read N- to C-terminus: Tryprostatin B 6-hydroxylase (548 aa).

3 helical membrane passes run 5–25, 35–54, and 73–93; these read MKCGYLATAGLIGICIHLWYF, WRYVRFHLCLTMGVSALLYA, and LLMVTYLIGLFTSLLLYRTLF. C491 serves as a coordination point for heme.

This sequence belongs to the cytochrome P450 family. The cofactor is heme.

The protein localises to the membrane. It carries out the reaction tryprostatin B + reduced [NADPH--hemoprotein reductase] + O2 = 6-hydroxytryprostatin B + oxidized [NADPH--hemoprotein reductase] + H2O + H(+). It participates in mycotoxin biosynthesis. Cytochrome P450 monooxygenase; part of the gene cluster that mediates the biosynthesis of fumitremorgins, indole alkaloids that carry not only intriguing chemical structures, but also interesting biological and pharmacological activities. The biosynthesis of fumitremorgin-type alkaloids begins by condensation of the two amino acids L-tryptophan and L-proline to brevianamide F, catalyzed by the non-ribosomal peptide synthetase ftmPS/ftmA. Brevianamide F is then prenylated by the prenyltransferase ftmPT1/ftmB in the presence of dimethylallyl diphosphate, resulting in the formation of tryprostatin B. The three cytochrome P450 monooxygenases, ftmP450-1/ftmC, ftmP450-2/ftmE and ftmP450-3/FtmG, are responsible for the conversion of tryprostatin B to 6-hydroxytryprostatin B, tryprostatin A to fumitremorgin C and fumitremorgin C to 12,13-dihydroxyfumitremorgin C, respectively. The putative methyltransferase ftmMT/ftmD is expected for the conversion of 6-hydroxytryprostatin B to tryprostatin A. FtmPT2/FtmH catalyzes the prenylation of 12,13-dihydroxyfumitre-morgin C in the presence of dimethylallyl diphosphate, resulting in the formation of fumitremorgin B. Fumitremorgin B is further converted to verruculogen by ftmOx1/ftmF via the insertion of an endoperoxide bond between the two prenyl moieties. Finally, verruculogen is further converted to fumitremorgin A by the verruculogen prenyltransferase ftmPT3. The sequence is that of Tryprostatin B 6-hydroxylase from Neosartorya fischeri (strain ATCC 1020 / DSM 3700 / CBS 544.65 / FGSC A1164 / JCM 1740 / NRRL 181 / WB 181) (Aspergillus fischerianus).